The chain runs to 429 residues: Enolase (429 aa).

Residue glutamine 168 coordinates (2R)-2-phosphoglycerate. Glutamate 210 acts as the Proton donor in catalysis. Mg(2+) contacts are provided by aspartate 247, glutamate 288, and aspartate 315. Positions 340, 369, 370, and 391 each coordinate (2R)-2-phosphoglycerate. Lysine 340 functions as the Proton acceptor in the catalytic mechanism.

This sequence belongs to the enolase family. Mg(2+) serves as cofactor.

It is found in the cytoplasm. It localises to the secreted. The protein localises to the cell surface. It catalyses the reaction (2R)-2-phosphoglycerate = phosphoenolpyruvate + H2O. Its pathway is carbohydrate degradation; glycolysis; pyruvate from D-glyceraldehyde 3-phosphate: step 4/5. In terms of biological role, catalyzes the reversible conversion of 2-phosphoglycerate (2-PG) into phosphoenolpyruvate (PEP). It is essential for the degradation of carbohydrates via glycolysis. The chain is Enolase from Nostoc punctiforme (strain ATCC 29133 / PCC 73102).